Here is a 117-residue protein sequence, read N- to C-terminus: Large ribosomal subunit protein uL22c (117 aa).

The protein belongs to the universal ribosomal protein uL22 family. As to quaternary structure, part of the 50S ribosomal subunit.

The protein resides in the plastid. It is found in the chloroplast. Its function is as follows. This protein binds specifically to 23S rRNA. The globular domain of the protein is located near the polypeptide exit tunnel on the outside of the subunit, while an extended beta-hairpin is found that lines the wall of the exit tunnel in the center of the 70S ribosome. The chain is Large ribosomal subunit protein uL22c (rpl22) from Pyropia yezoensis (Susabi-nori).